The primary structure comprises 184 residues: Ethylene-responsive transcription factor ERF122 (184 aa).

The segment at residues 120-177 (KYKGVRKKPSGKWAAEIWDPRSKSRRWLGTFLTAEMAAQSYNDAAAEYRARRGKTNGE) is a DNA-binding region (AP2/ERF).

Belongs to the AP2/ERF transcription factor family. ERF subfamily.

Its subcellular location is the nucleus. Functionally, probably acts as a transcriptional activator. Binds to the GCC-box pathogenesis-related promoter element. May be involved in the regulation of gene expression by stress factors and by components of stress signal transduction pathways. The chain is Ethylene-responsive transcription factor ERF122 (ERF122) from Arabidopsis thaliana (Mouse-ear cress).